Reading from the N-terminus, the 427-residue chain is MRNKIFSSLYFQVLLAITLGVFLGHVYPDLGADMKPLGDGFVKLIKMIIAPVIFCTVVTGIAGMESMKAVGKTGAIALLYFEVVSTIALVIGLCVVNLLQPGVGMNVDPATLDASAISAYAEQAKSQGIIAFLLDVIPGSVIGAFASGNILQVLLFAVLFGFSLHHIGEKGKLIFNVIDSFSQVIFGIINMIMRLAPVGAFGAMAFTIGKYGIGSLVQLGQLIACFYVTCLLFIFMVLGSIARANGFSILRFISYIKEELLIVLGTSSSESVLPRMLVKMEALGCKKSVVGLVIPTGYSFNLDGTSIYLTMAAIFIAQATNTPLDLFQQITLLVVLLISSKGAAGVTGSGFIVLAATISAVGHLPLAGLALILGIDRFMSEARALTNLIGNGVATVVVARYCDQLDEQQMNEVLANPAAVQKVDQHG.

9 helical membrane passes run 5–25 (IFSSLYFQVLLAITLGVFLGH), 44–64 (LIKMIIAPVIFCTVVTGIAGM), 76–96 (IALLYFEVVSTIALVIGLCVV), 142–162 (IGAFASGNILQVLLFAVLFGF), 184–206 (VIFGIINMIMRLAPVGAFGAMAF), 222–242 (LIACFYVTCLLFIFMVLGSIA), 307–327 (IYLTMAAIFIAQATNTPLDLF), 330–350 (ITLLVVLLISSKGAAGVTGSG), and 352–372 (IVLAATISAVGHLPLAGLALI).

The protein belongs to the dicarboxylate/amino acid:cation symporter (DAACS) (TC 2.A.23) family.

The protein resides in the cell inner membrane. Its function is as follows. Responsible for the transport of dicarboxylates such as succinate, fumarate, and malate from the periplasm across the membrane. The protein is C4-dicarboxylate transport protein of Aeromonas salmonicida (strain A449).